We begin with the raw amino-acid sequence, 245 residues long: 1-acyl-sn-glycerol-3-phosphate acyltransferase (245 aa).

The HXXXXD motif motif lies at 73-78; sequence HQNNYD.

The protein belongs to the 1-acyl-sn-glycerol-3-phosphate acyltransferase family.

The protein localises to the cell inner membrane. The catalysed reaction is a 1-acyl-sn-glycero-3-phosphate + an acyl-CoA = a 1,2-diacyl-sn-glycero-3-phosphate + CoA. It functions in the pathway phospholipid metabolism; CDP-diacylglycerol biosynthesis; CDP-diacylglycerol from sn-glycerol 3-phosphate: step 2/3. Functionally, converts lysophosphatidic acid (LPA) into phosphatidic acid by incorporating an acyl moiety at the 2 position. This enzyme can utilize either acyl-CoA or acyl-acyl-carrier-protein as the fatty acyl donor. The protein is 1-acyl-sn-glycerol-3-phosphate acyltransferase (plsC) of Salmonella typhi.